The primary structure comprises 298 residues: 3'-5' exonuclease crn-4 (298 aa).

Positions 12–192 (LILDFETTSD…DDCLNIATIL (181 aa)) constitute an Exonuclease domain. Mg(2+) is bound by residues aspartate 15, glutamate 17, and aspartate 184. Residues cysteine 210, cysteine 260, cysteine 263, and cysteine 270 each contribute to the Zn(2+) site.

In terms of assembly, homodimer (via C-terminus). Interacts with crn-5; interaction promotes the DNase activity of crn-4. Interacts with cps-6, crn-1 and cyn-13. The cofactor is Mg(2+).

Exonuclease activity is inhibited in vitro by pontacyl violet 6R (PV6R), p-chloromercuriphenyl sulfonate (PCMPS), 5,5'-dithiobis(2-nitrobenzoic acid) (DTNB), aurintricarboxylic acid (ATA), 2-morpholin-4-ylethanesulfonate (MES), 4-[(4,6-dichloro-1,3,5-triazin-2-yl)amino]-2-(3-hydroxy-6-oxoxanthen-9-yl)benzoic acid (DR396) and fmoc-d-Cha-OH (FDCO). Interaction with ssRNA is reduced in vitro by PV6R. In terms of biological role, possesses 3'-&gt;5' exoribonuclease activity in digestion of DNA and RNA. Cleaves nucleic acid substrates with efficiencies in the following order: single-stranded RNA (ssRNA) &gt; double-stranded DNA (dsDNA) &gt; single-stranded DNA (ssDNA). Involved in apoptotic DNA degradation. In Caenorhabditis elegans, this protein is 3'-5' exonuclease crn-4 (crn-4).